The chain runs to 125 residues: Large ribosomal subunit protein bL12 (125 aa).

Belongs to the bacterial ribosomal protein bL12 family. As to quaternary structure, homodimer. Part of the ribosomal stalk of the 50S ribosomal subunit. Forms a multimeric L10(L12)X complex, where L10 forms an elongated spine to which 2 to 4 L12 dimers bind in a sequential fashion. Binds GTP-bound translation factors.

In terms of biological role, forms part of the ribosomal stalk which helps the ribosome interact with GTP-bound translation factors. Is thus essential for accurate translation. This chain is Large ribosomal subunit protein bL12, found in Francisella tularensis subsp. holarctica (strain FTNF002-00 / FTA).